We begin with the raw amino-acid sequence, 491 residues long: Probable glycine dehydrogenase (decarboxylating) subunit 2 (491 aa).

K273 is subject to N6-(pyridoxal phosphate)lysine.

The protein belongs to the GcvP family. C-terminal subunit subfamily. As to quaternary structure, the glycine cleavage system is composed of four proteins: P, T, L and H. In this organism, the P 'protein' is a heterodimer of two subunits. The cofactor is pyridoxal 5'-phosphate.

The enzyme catalyses N(6)-[(R)-lipoyl]-L-lysyl-[glycine-cleavage complex H protein] + glycine + H(+) = N(6)-[(R)-S(8)-aminomethyldihydrolipoyl]-L-lysyl-[glycine-cleavage complex H protein] + CO2. In terms of biological role, the glycine cleavage system catalyzes the degradation of glycine. The P protein binds the alpha-amino group of glycine through its pyridoxal phosphate cofactor; CO(2) is released and the remaining methylamine moiety is then transferred to the lipoamide cofactor of the H protein. The protein is Probable glycine dehydrogenase (decarboxylating) subunit 2 of Bacillus velezensis (strain DSM 23117 / BGSC 10A6 / LMG 26770 / FZB42) (Bacillus amyloliquefaciens subsp. plantarum).